A 140-amino-acid polypeptide reads, in one-letter code: Nucleoside diphosphate kinase (140 aa).

Residues Lys11, Phe59, Arg87, Thr93, Arg104, and Asn114 each coordinate ATP. Residue His117 is the Pros-phosphohistidine intermediate of the active site.

This sequence belongs to the NDK family. As to quaternary structure, homotetramer. Requires Mg(2+) as cofactor.

The protein resides in the cytoplasm. It catalyses the reaction a 2'-deoxyribonucleoside 5'-diphosphate + ATP = a 2'-deoxyribonucleoside 5'-triphosphate + ADP. It carries out the reaction a ribonucleoside 5'-diphosphate + ATP = a ribonucleoside 5'-triphosphate + ADP. In terms of biological role, major role in the synthesis of nucleoside triphosphates other than ATP. The ATP gamma phosphate is transferred to the NDP beta phosphate via a ping-pong mechanism, using a phosphorylated active-site intermediate. The protein is Nucleoside diphosphate kinase of Mesorhizobium japonicum (strain LMG 29417 / CECT 9101 / MAFF 303099) (Mesorhizobium loti (strain MAFF 303099)).